Reading from the N-terminus, the 135-residue chain is uncharacterized protein (135 aa).

4 consecutive transmembrane segments (helical) span residues 4–24 (IIIC…WIFG), 26–46 (WDMP…TGVI), 68–88 (LILV…NGAW), and 93–113 (LIAY…CAAL).

The protein belongs to the bacteriophage holin family. Cp-1 holin subfamily.

The protein resides in the cell membrane. This is an uncharacterized protein from Clostridium perfringens (strain 13 / Type A).